Here is a 431-residue protein sequence, read N- to C-terminus: Histidinol dehydrogenase (431 aa).

3 residues coordinate NAD(+): tyrosine 129, glutamine 191, and asparagine 214. Substrate is bound by residues serine 237, glutamine 259, and histidine 262. Zn(2+) contacts are provided by glutamine 259 and histidine 262. Catalysis depends on proton acceptor residues glutamate 327 and histidine 328. The substrate site is built by histidine 328, aspartate 361, glutamate 415, and histidine 420. Zn(2+) is bound at residue aspartate 361. Histidine 420 provides a ligand contact to Zn(2+).

It belongs to the histidinol dehydrogenase family. Requires Zn(2+) as cofactor.

The catalysed reaction is L-histidinol + 2 NAD(+) + H2O = L-histidine + 2 NADH + 3 H(+). It functions in the pathway amino-acid biosynthesis; L-histidine biosynthesis; L-histidine from 5-phospho-alpha-D-ribose 1-diphosphate: step 9/9. Functionally, catalyzes the sequential NAD-dependent oxidations of L-histidinol to L-histidinaldehyde and then to L-histidine. The protein is Histidinol dehydrogenase (hisD) of Lactococcus lactis subsp. lactis (strain IL1403) (Streptococcus lactis).